The sequence spans 364 residues: DNA primase large subunit PriL (364 aa).

Residues C237, C309, C318, and C325 each contribute to the [4Fe-4S] cluster site. The disordered stretch occupies residues 345–364; it reads MQNDNEKGHEEKKEGETPPQ.

The protein belongs to the eukaryotic-type primase large subunit family. Heterodimer of a small subunit (PriS) and a large subunit (PriL). [4Fe-4S] cluster serves as cofactor.

Functionally, regulatory subunit of DNA primase, an RNA polymerase that catalyzes the synthesis of short RNA molecules used as primers for DNA polymerase during DNA replication. Stabilizes and modulates the activity of the small subunit, increasing the rate of DNA synthesis, and conferring RNA synthesis capability. The DNA polymerase activity may enable DNA primase to also catalyze primer extension after primer synthesis. May also play a role in DNA repair. The sequence is that of DNA primase large subunit PriL from Methanococcoides burtonii (strain DSM 6242 / NBRC 107633 / OCM 468 / ACE-M).